The following is a 132-amino-acid chain: Cell division protein FtsL (132 aa).

Topologically, residues 1–50 (MAELKKMRHNHYDVPVMDEPVIASQIKKTNQKKESFQLPQKKLNKISVFE) are cytoplasmic. Residues 51–71 (KILCILLLCSIVGIVVITIQI) traverse the membrane as a helical segment. Topologically, residues 72 to 132 (RTTISETMNN…EIDGNLRKVK (61 aa)) are extracellular.

It belongs to the FtsL family.

The protein localises to the cell membrane. Essential cell division protein. The polypeptide is Cell division protein FtsL (Melissococcus plutonius (strain ATCC 35311 / DSM 29964 / CIP 104052 / LMG 20360 / NCIMB 702443)).